The sequence spans 152 residues: Small ribosomal subunit protein uS19z (152 aa).

The protein belongs to the universal ribosomal protein uS19 family.

It localises to the cytoplasm. This is Small ribosomal subunit protein uS19z (RPS15B) from Arabidopsis thaliana (Mouse-ear cress).